The chain runs to 131 residues: Small ribosomal subunit protein uS8 (131 aa).

It belongs to the universal ribosomal protein uS8 family. Part of the 30S ribosomal subunit. Contacts proteins S5 and S12.

One of the primary rRNA binding proteins, it binds directly to 16S rRNA central domain where it helps coordinate assembly of the platform of the 30S subunit. In Paraburkholderia phymatum (strain DSM 17167 / CIP 108236 / LMG 21445 / STM815) (Burkholderia phymatum), this protein is Small ribosomal subunit protein uS8.